The sequence spans 245 residues: tRNA pseudouridine synthase A (245 aa).

Residue Asp52 is the Nucleophile of the active site. Tyr111 provides a ligand contact to substrate.

It belongs to the tRNA pseudouridine synthase TruA family. In terms of assembly, homodimer.

The catalysed reaction is uridine(38/39/40) in tRNA = pseudouridine(38/39/40) in tRNA. In terms of biological role, formation of pseudouridine at positions 38, 39 and 40 in the anticodon stem and loop of transfer RNAs. This chain is tRNA pseudouridine synthase A, found in Rhodospirillum centenum (strain ATCC 51521 / SW).